The primary structure comprises 265 residues: Neuronal membrane glycoprotein M6-b (265 aa).

The chain crosses the membrane as a helical span at residues 31–51; that stretch reads GGVPYASLVATILCFSGVALF. N73 carries N-linked (GlcNAc...) asparagine glycosylation. The next 2 helical transmembrane spans lie at 90 to 110 and 136 to 156; these read VIYGIASFFFLYGIILLAEGF and FVFLTYVLGVAWLGVFGFSAV. Residue N177 is glycosylated (N-linked (GlcNAc...) asparagine). The helical transmembrane segment at 224–244 threads the bilayer; sequence LFIVACAGAGATVIALLIYMM. Phosphoserine is present on S257.

The protein belongs to the myelin proteolipid protein family. In terms of assembly, interacts with SERT. In terms of tissue distribution, highly expressed in the ventral medullary surface, moderately in the cerebral cortex and cerebellum, poorly in lung and kidney, and not at all in heart, skeletal muscle, liver, stomach or stomach.

The protein localises to the membrane. The protein resides in the cell membrane. Its function is as follows. May be involved in neural development. Involved in regulation of osteoblast function and bone formation. Involved in matrix vesicle release by osteoblasts; this function seems to involve maintenance of the actin cytoskeleton. May be involved in cellular trafficking of SERT and thereby in regulation of serotonin uptake. The chain is Neuronal membrane glycoprotein M6-b (Gpm6b) from Rattus norvegicus (Rat).